The sequence spans 705 residues: Phycobiliprotein ApcE (705 aa).

The interval 18–76 (QTVPGSTIVQAEQQDRFPQQGELRELSSYFQSGLKRLAIAEIITRNSDTIVSRAANRIF) is phycobilin-like 1. The segment at 77 to 145 (VGGSPLAYIE…VRIPSGFRPI (69 aa)) is phycobilin-like loop. Residues 146–238 (NVARYGPRNM…YFDVLIREFE (93 aa)) form a phycobilin-like 2 region. C196 is a binding site for (2R,3E)-phycocyanobilin. 2 consecutive PBS-linker domains span residues 253–433 (DQQG…FVKV) and 514–691 (KIFK…SLRP). Positions 685 to 705 (VKASLRPAAGAQERRPEVGRR) are disordered. Residues 696–705 (QERRPEVGRR) show a composition bias toward basic and acidic residues.

The protein belongs to the phycobilisome linker protein family. As to quaternary structure, phycobilisomes of this organism are composed of a two cylinder core, from which six rods radiate. The core is mainly composed of allophycocyanin alpha and beta chains, and of three minor components: the allophycocyanin alpha-B chain, a 18.3 kDa polypeptide, and the anchor polypeptide L-CM. Contains one covalently linked bilin chromophore. This protein autochromophorylates.

Its subcellular location is the cellular thylakoid membrane. Its function is as follows. This protein is postulated to act both as terminal energy acceptor (by its phycobilin-like domains) and as a linker polypeptide (by its repeats and arms) that stabilizes the phycobilisome core architecture. Has intrinsic bilin lyase activity. The chain is Phycobiliprotein ApcE (apcE) from Synechococcus sp. (strain ATCC 27144 / PCC 6301 / SAUG 1402/1) (Anacystis nidulans).